The primary structure comprises 338 residues: Aspartate carbamoyltransferase catalytic subunit (338 aa).

Carbamoyl phosphate is bound by residues R59 and T60. K87 serves as a coordination point for L-aspartate. The carbamoyl phosphate site is built by R109, H142, and Q145. Residues R182 and R253 each contribute to the L-aspartate site. Carbamoyl phosphate-binding residues include G294 and P295.

The protein belongs to the aspartate/ornithine carbamoyltransferase superfamily. ATCase family. In terms of assembly, heterododecamer (2C3:3R2) of six catalytic PyrB chains organized as two trimers (C3), and six regulatory PyrI chains organized as three dimers (R2).

The catalysed reaction is carbamoyl phosphate + L-aspartate = N-carbamoyl-L-aspartate + phosphate + H(+). Its pathway is pyrimidine metabolism; UMP biosynthesis via de novo pathway; (S)-dihydroorotate from bicarbonate: step 2/3. Functionally, catalyzes the condensation of carbamoyl phosphate and aspartate to form carbamoyl aspartate and inorganic phosphate, the committed step in the de novo pyrimidine nucleotide biosynthesis pathway. This Prochlorococcus marinus (strain AS9601) protein is Aspartate carbamoyltransferase catalytic subunit.